The primary structure comprises 480 residues: UDP-N-acetylmuramate--L-alanine ligase (480 aa).

ATP is bound at residue 125 to 131 (GTHGKTT).

Belongs to the MurCDEF family.

It is found in the cytoplasm. The catalysed reaction is UDP-N-acetyl-alpha-D-muramate + L-alanine + ATP = UDP-N-acetyl-alpha-D-muramoyl-L-alanine + ADP + phosphate + H(+). The protein operates within cell wall biogenesis; peptidoglycan biosynthesis. Cell wall formation. This is UDP-N-acetylmuramate--L-alanine ligase from Ectopseudomonas mendocina (strain ymp) (Pseudomonas mendocina).